A 752-amino-acid chain; its full sequence is BCLAF1 and THRAP3 family member 3 (752 aa).

Residues 1 to 13 show a composition bias toward basic residues; that stretch reads MARSRSRSPRWKQ. 3 disordered regions span residues 1 to 114, 132 to 177, and 190 to 252; these read MARS…YMPT, PTVQ…QMSL, and DELR…DPAR. Ser15 and Ser17 each carry phosphoserine. A compositionally biased stretch (basic and acidic residues) spans 23–57; that stretch reads FEYHEERHFHGHYDPEYRHDQQRPFTWRMDDEKHG. Ser78 and Ser80 each carry phosphoserine. The segment covering 85–109 has biased composition (basic and acidic residues); the sequence is PVEKFDTYKPHQEYFPGRGDDDRRS. The segment covering 190 to 199 has biased composition (basic and acidic residues); it reads DELRHQRVQE. Position 205 is a phosphoserine (Ser205). Basic and acidic residues-rich tracts occupy residues 222-231 and 238-252; these read RYPEDHDFRK and RPTDAARYENRDPAR. A Glycyl lysine isopeptide (Lys-Gly) (interchain with G-Cter in SUMO2) cross-link involves residue Lys416. Phosphoserine is present on Ser592.

Belongs to the BCLAF1/THRAP3 family.

The protein localises to the mitochondrion. The chain is BCLAF1 and THRAP3 family member 3 from Mus musculus (Mouse).